We begin with the raw amino-acid sequence, 658 residues long: Threonine--tRNA ligase (658 aa).

One can recognise a TGS domain in the interval 1–63 (MDQITITFPD…DDNASIDFVA (63 aa)). The catalytic stretch occupies residues 245–548 (DHRKLGRELD…LIEHYAGNFP (304 aa)). The Zn(2+) site is built by cysteine 341, histidine 392, and histidine 525.

The protein belongs to the class-II aminoacyl-tRNA synthetase family. As to quaternary structure, homodimer. Zn(2+) serves as cofactor.

It localises to the cytoplasm. It carries out the reaction tRNA(Thr) + L-threonine + ATP = L-threonyl-tRNA(Thr) + AMP + diphosphate + H(+). Its function is as follows. Catalyzes the attachment of threonine to tRNA(Thr) in a two-step reaction: L-threonine is first activated by ATP to form Thr-AMP and then transferred to the acceptor end of tRNA(Thr). Also edits incorrectly charged L-seryl-tRNA(Thr). The polypeptide is Threonine--tRNA ligase (Rhodopseudomonas palustris (strain ATCC BAA-98 / CGA009)).